The following is a 655-amino-acid chain: MSGDPRSFSFNQGDDHPIDSSQQPLHPTNTMADSYSDRNWGAPGGLDHTHSMRTQSTATPGMDNLGPAAVGGGISGIALGVANSHDRQSGVDAFRDTDGGNFPAERGYNAPGSDNPYVPPPPAAAYDSSDNLTARSGAYGSSAALAAAASAPAGASNTSRRSFVDSPYQGVGALDAGPYQRQSVYNNGDYPLVINPDEIIDDGDDGFALPNSKSAGHKSRAVPAAAAGAAGGAAAGGLLGGIFKSKAAAEGPSYGPVPGAGIEAAEKGQWAKPKPGTGSRKRGWIVGIILAVVIVGAIVGGAVGGTLGNREKESPSSSETASGDEKVNGDLGKDSDEIKSLMNNPNLHKVFPGMDYTPWGTQYPLCQKYPPSQNNVTRDIAVLSQLTNTVRLYGTDCNQTEMVLHAIDRLELTEMKLWLGVWIDTNKTTCERQLNQLYDVLDKTKDHSIFKGAIIGNEALYRAGSSIAEAEKTLISYMTEVRDHFKKNNINIPIATSDLGDNWNAELVKASDVVMANVHPFFAGVSVDLAASWTWDFWNNHNLVLTKGTDKKQIISEVGWPSGGGNDCGDGGNCPNDSAGSVAGIDEMNQFMSDWVCQALDNGTDYFWFEAFDEPWKIVYNTKNENWEDKWGLMDPARNLKDGLKIPDCGGKTAT.

2 disordered regions span residues 1-61 (MSGD…ATPG) and 89-114 (SGVD…PGSD). At 1-282 (MSGDPRSFSF…PKPGTGSRKR (282 aa)) the chain is on the cytoplasmic side. A compositionally biased stretch (polar residues) spans 19–33 (DSSQQPLHPTNTMAD). The span at 89 to 98 (SGVDAFRDTD) shows a compositional bias: basic and acidic residues. Residues 283–303 (GWIVGIILAVVIVGAIVGGAV) form a helical; Signal-anchor for type II membrane protein membrane-spanning segment. The Extracellular portion of the chain corresponds to 304-655 (GGTLGNREKE…IPDCGGKTAT (352 aa)). Positions 305 to 338 (GTLGNREKESPSSSETASGDEKVNGDLGKDSDEI) are disordered. Residues 323 to 338 (GDEKVNGDLGKDSDEI) show a composition bias toward basic and acidic residues. Residue Asn426 is glycosylated (N-linked (GlcNAc...) asparagine). Glu458 functions as the Proton donor in the catalytic mechanism. Glu557 serves as the catalytic Nucleophile. 2 N-linked (GlcNAc...) asparagine glycosylation sites follow: Asn576 and Asn602.

It belongs to the glycosyl hydrolase 17 family.

It is found in the cell membrane. It catalyses the reaction Hydrolysis of (1-&gt;3)-beta-D-glucosidic linkages in (1-&gt;3)-beta-D-glucans.. Its function is as follows. Glucanases play a role in cell expansion during growth, in cell-cell fusion during mating, and in spore release during sporulation. This enzyme may be involved in beta-glucan degradation. Active on laminarin and lichenan. This Aspergillus terreus (strain NIH 2624 / FGSC A1156) protein is Probable glucan endo-1,3-beta-glucosidase btgC (btgC).